Consider the following 199-residue polypeptide: MAEPRYKADIGGGSLKLPESRIIAGLLLEGVTEDQWRHAIEVENVLQRRSPGTAKRQSSLMRNRLETMGPELWQMVRDGSTQVAIQAVFAAAIKHSTLLGDFLDLVVRDQFRMFRPDLPRKMWDQYLEQCRNRDPLMPVWQDSTANKLADCVYRILVEVGYITDSKTYRLKSVRISGEVMSYLRENNEQYVIRCIQVSI.

It belongs to the BrxA family.

Its function is as follows. BREX systems (bacteriophage exclusion) provide immunity against bacteriophage. Part of a type 1 BREX system which protects against dsDNA phage. This system allows phage adsorption but prevents phage DNA replication, without degradation of the phage DNA. Methylation of bacterial DNA by PglX guides self/non-self discrimination. This Paramagnetospirillum magneticum (strain ATCC 700264 / AMB-1) (Magnetospirillum magneticum) protein is BREX protein BrxA.